The chain runs to 140 residues: ATP synthase epsilon chain 1 (140 aa).

It belongs to the ATPase epsilon chain family. F-type ATPases have 2 components, CF(1) - the catalytic core - and CF(0) - the membrane proton channel. CF(1) has five subunits: alpha(3), beta(3), gamma(1), delta(1), epsilon(1). CF(0) has three main subunits: a, b and c.

It is found in the cell inner membrane. In terms of biological role, produces ATP from ADP in the presence of a proton gradient across the membrane. This is ATP synthase epsilon chain 1 from Methylococcus capsulatus (strain ATCC 33009 / NCIMB 11132 / Bath).